The following is a 326-amino-acid chain: MNTSHHHGLHHSFRNHSQGALPVGKPSHGDRGSASGCYEQLLISTEIFLTLGLVSLLENILVIAAIVKNKNLHSPMYFFICSLAVADLLVSVSNASETVVMALITGGNLTNRESIIKNMDNVFDSMICSSLLASIWSLLAIAVDRYITIFYALRYHNIMTQRRAGTIITCIWTFCTVSGVLFIVYSESTTVLICLISMFFTMLALMASLYVHMFLLARLHMKRIAALPGNGPIWQAANMKGAITITILLGVFVVCWAPFFLHLILMISCPRNPYCVCFMSHFNMYLILIMCNSVIDPLIYAFRSQEMRKTFKEICCCWYGLASLCV.

The segment covering 1–14 has biased composition (basic residues); sequence MNTSHHHGLHHSFR. The disordered stretch occupies residues 1–31; it reads MNTSHHHGLHHSFRNHSQGALPVGKPSHGDR. Over 1-46 the chain is Extracellular; the sequence is MNTSHHHGLHHSFRNHSQGALPVGKPSHGDRGSASGCYEQLLISTE. N-linked (GlcNAc...) asparagine glycans are attached at residues asparagine 2 and asparagine 15. The chain crosses the membrane as a helical span at residues 47 to 67; that stretch reads IFLTLGLVSLLENILVIAAIV. At 68 to 71 the chain is on the cytoplasmic side; it reads KNKN. The helical transmembrane segment at 72-92 threads the bilayer; the sequence is LHSPMYFFICSLAVADLLVSV. At 93–121 the chain is on the extracellular side; it reads SNASETVVMALITGGNLTNRESIIKNMDN. N-linked (GlcNAc...) asparagine glycans are attached at residues asparagine 94 and asparagine 108. Residues 122–142 traverse the membrane as a helical segment; that stretch reads VFDSMICSSLLASIWSLLAIA. The Cytoplasmic portion of the chain corresponds to 143 to 163; that stretch reads VDRYITIFYALRYHNIMTQRR. A helical membrane pass occupies residues 164-184; that stretch reads AGTIITCIWTFCTVSGVLFIV. Residues 185-190 lie on the Extracellular side of the membrane; that stretch reads YSESTT. The chain crosses the membrane as a helical span at residues 191–211; it reads VLICLISMFFTMLALMASLYV. Residues 212-246 are Cytoplasmic-facing; it reads HMFLLARLHMKRIAALPGNGPIWQAANMKGAITIT. Residues 247-267 traverse the membrane as a helical segment; sequence ILLGVFVVCWAPFFLHLILMI. The Extracellular portion of the chain corresponds to 268-281; that stretch reads SCPRNPYCVCFMSH. A helical membrane pass occupies residues 282-302; that stretch reads FNMYLILIMCNSVIDPLIYAF. Residues 303-326 lie on the Cytoplasmic side of the membrane; sequence RSQEMRKTFKEICCCWYGLASLCV. Cysteine 316 is lipidated: S-palmitoyl cysteine.

It belongs to the G-protein coupled receptor 1 family. As to quaternary structure, homodimer; disulfide-linked, also forms higher order oligomers. Interacts with mrap2a; decreasing ligand-sensitivity. Interacts with mrap2b; increasing ligand-sensitivity and generation of cAMP.

It is found in the cell membrane. In terms of biological role, receptor specific to the heptapeptide core common to adrenocorticotropic hormone and alpha-, beta-, and gamma-MSH. Plays a central role in energy homeostasis and somatic growth. This receptor is mediated by G proteins that stimulate adenylate cyclase (cAMP). The chain is Melanocortin receptor 4 (mc4r) from Danio rerio (Zebrafish).